A 302-amino-acid chain; its full sequence is Nucleotide-binding protein BceJ2315_08000 (302 aa).

Residue 8–15 coordinates ATP; the sequence is GISGSGKS. 57 to 60 provides a ligand contact to GTP; sequence DARS.

It belongs to the RapZ-like family.

Displays ATPase and GTPase activities. The protein is Nucleotide-binding protein BceJ2315_08000 of Burkholderia cenocepacia (strain ATCC BAA-245 / DSM 16553 / LMG 16656 / NCTC 13227 / J2315 / CF5610) (Burkholderia cepacia (strain J2315)).